We begin with the raw amino-acid sequence, 359 residues long: Peptide chain release factor 1 (359 aa).

The residue at position 236 (Gln-236) is an N5-methylglutamine.

It belongs to the prokaryotic/mitochondrial release factor family. In terms of processing, methylated by PrmC. Methylation increases the termination efficiency of RF1.

The protein resides in the cytoplasm. Peptide chain release factor 1 directs the termination of translation in response to the peptide chain termination codons UAG and UAA. The sequence is that of Peptide chain release factor 1 from Streptococcus agalactiae serotype Ia (strain ATCC 27591 / A909 / CDC SS700).